Here is a 1376-residue protein sequence, read N- to C-terminus: Spike glycoprotein (1376 aa).

Positions 1 to 13 (MLFVFILFLPSCL) are cleaved as a signal peptide. The Extracellular portion of the chain corresponds to 14–1317 (GYIGDFRCIQ…GTYEMYVKWP (1304 aa)). The BetaCoV S1-NTD domain occupies 15-296 (YIGDFRCIQT…SYISEIKCKT (282 aa)). The segment at 15–330 (YIGDFRCIQT…RRVPNLPDCK (316 aa)) is receptor binding site. 5 cysteine pairs are disulfide-bonded: Cys21–Cys158, Cys153–Cys187, Cys165–Cys246, Cys284–Cys294, and Cys329–Cys354. Residues Asn31, Asn60, and Asn134 are each glycosylated (N-linked (GlcNAc...) asparagine; by host). Residue Asn192 is glycosylated (N-linked (GlcNAc...) asparagine; by host). Residues 327-618 (PDCKIEEWLT…GINSGTTCST (292 aa)) enclose the BetaCoV S1-CTD domain. Asn357 carries an N-linked (GlcNAc...) asparagine; by host glycan. 2 disulfides stabilise this stretch: Cys372/Cys425 and Cys384/Cys616. N-linked (GlcNAc...) asparagine; by host glycosylation is found at Asn435, Asn677, Asn709, Asn717, Asn789, and Asn806. 2 fusion peptide regions span residues 922-943 (SAIE…VEAY) and 941-961 (EAYN…VQSF). Residue Asn945 is glycosylated (N-linked (GlcNAc...) asparagine; by host). Cys946 and Cys957 form a disulfide bridge. The segment at 1022-1072 (QKMIASAFNNALGAIQEGFDATNSALGKIQSVVNANAEALNNLLNQLSNRF) is heptad repeat 1. The stretch at 1051–1095 (QSVVNANAEALNNLLNQLSNRFGAISASLQEILTRLDRVEAKAQI) forms a coiled coil. Asn1232, Asn1242, Asn1261, Asn1277, and Asn1298 each carry an N-linked (GlcNAc...) asparagine; by host glycan. Residues 1266–1306 (APDLSLDFEKLNVTFLDLTYEMNRIQDAIKKLNESYINLKE) form a heptad repeat 2 region. Positions 1279–1307 (TFLDLTYEMNRIQDAIKKLNESYINLKEV) form a coiled coil. Residues 1318–1338 (WYVWLLIGLAGVAVCVLLFFI) traverse the membrane as a helical segment. Residues 1339–1376 (CCCTGCGSCCFRKCGSCCDEYGGHQDSIVIYNISAHED) are Cytoplasmic-facing. The short motif at 1372–1376 (SAHED) is the KxHxx element.

Belongs to the betacoronaviruses spike protein family. In terms of assembly, homotrimer; each monomer consists of a S1 and a S2 subunit. The resulting peplomers protrude from the virus surface as spikes. Post-translationally, specific enzymatic cleavages in vivo yield mature proteins. The precursor is processed into S1 and S2 by host cell furin or another cellular protease to yield the mature S1 and S2 proteins. Additionally, a second cleavage leads to the release of a fusion peptide after viral attachment to host cell receptor. The cytoplasmic Cys-rich domain is palmitoylated. Spike glycoprotein is digested within host endosomes.

It localises to the virion membrane. It is found in the host endoplasmic reticulum-Golgi intermediate compartment membrane. Its subcellular location is the host cell membrane. In terms of biological role, attaches the virion to the cell membrane by interacting with host receptor, initiating the infection. Its function is as follows. Mediates fusion of the virion and cellular membranes by acting as a class I viral fusion protein. Under the current model, the protein has at least three conformational states: pre-fusion native state, pre-hairpin intermediate state, and post-fusion hairpin state. During viral and target cell membrane fusion, the coiled coil regions (heptad repeats) assume a trimer-of-hairpins structure, positioning the fusion peptide in close proximity to the C-terminal region of the ectodomain. The formation of this structure appears to drive apposition and subsequent fusion of viral and target cell membranes. Acts as a viral fusion peptide which is unmasked following S2 cleavage occurring upon virus endocytosis. The polypeptide is Spike glycoprotein (Mus musculus (Mouse)).